The chain runs to 76 residues: Large ribosomal subunit protein uL29 (76 aa).

The protein belongs to the universal ribosomal protein uL29 family.

This Corynebacterium kroppenstedtii (strain DSM 44385 / JCM 11950 / CIP 105744 / CCUG 35717) protein is Large ribosomal subunit protein uL29.